A 424-amino-acid chain; its full sequence is Tryptophan synthase beta chain (424 aa).

At Lys-108 the chain carries N6-(pyridoxal phosphate)lysine.

Belongs to the TrpB family. In terms of assembly, tetramer of two alpha and two beta chains. The cofactor is pyridoxal 5'-phosphate.

It carries out the reaction (1S,2R)-1-C-(indol-3-yl)glycerol 3-phosphate + L-serine = D-glyceraldehyde 3-phosphate + L-tryptophan + H2O. It participates in amino-acid biosynthesis; L-tryptophan biosynthesis; L-tryptophan from chorismate: step 5/5. Functionally, the beta subunit is responsible for the synthesis of L-tryptophan from indole and L-serine. The protein is Tryptophan synthase beta chain (trpB) of Thermoplasma acidophilum (strain ATCC 25905 / DSM 1728 / JCM 9062 / NBRC 15155 / AMRC-C165).